The sequence spans 99 residues: YcgL domain-containing protein HD_1373 (99 aa).

The YcgL domain maps to 8 to 92 (NFCAIYKSMS…PAENLLKQFL (85 aa)).

The chain is YcgL domain-containing protein HD_1373 from Haemophilus ducreyi (strain 35000HP / ATCC 700724).